Consider the following 733-residue polypeptide: DNA repair and recombination protein RAD54-like (733 aa).

The segment at 1–35 (LAKRKAGGEEEDGEWRPPATQKRQKAGSEAESADC) is disordered. In terms of domain architecture, Helicase ATP-binding spans 159-334 (SRRIPGSHGC…FSLVHFVNSG (176 aa)). 172–179 (DEMGLGKT) provides a ligand contact to ATP. The DEGH box motif lies at 285–288 (DEGH). Positions 488–642 (LVLDYILAVT…CVVDEEQDVE (155 aa)) constitute a Helicase C-terminal domain. K504 is modified (N6-acetyllysine). At S561 the chain carries Phosphoserine; by NEK1.

It belongs to the SNF2/RAD54 helicase family. In terms of assembly, homohexamer. Interacts (via N-terminus) with RAD51. Interacts with NAP1L1. Interacts with BRD9; this interaction orchestrates RAD51-RAD54 complex formation. Post-translationally, acetylated. Acetylation promotes interaction with BRD9, and subsequently with RAD54, which is essential for homologous recombination (HR). Phosphorylated. Phosphorylation at Ser-561 by NEK1 specifically in G2 phase allows efficient removal of RAD51 filaments from DNA. Highly expressed in bursa, thymus, testis, and ovary. Low level of expression seen in all other organs tested.

The protein localises to the nucleus. In terms of biological role, plays an essential role in homologous recombination (HR) which is a major pathway for repairing DNA double-strand breaks (DSBs), single-stranded DNA (ssDNA) gaps, and stalled or collapsed replication forks. Acts as a molecular motor during the homology search and guides RAD51 ssDNA along a donor dsDNA thereby changing the homology search from the diffusion-based mechanism to a motor-guided mechanism. Plays also an essential role in RAD51-mediated synaptic complex formation which consists of three strands encased in a protein filament formed once homology is recognized. Once DNA strand exchange occured, dissociates RAD51 from nucleoprotein filaments formed on dsDNA. The chain is DNA repair and recombination protein RAD54-like (RAD54L) from Gallus gallus (Chicken).